We begin with the raw amino-acid sequence, 158 residues long: 6,7-dimethyl-8-ribityllumazine synthase (158 aa).

Residues F23, 61–63, and 85–87 contribute to the 5-amino-6-(D-ribitylamino)uracil site; these read SFE and AVI. A (2S)-2-hydroxy-3-oxobutyl phosphate-binding site is contributed by 90-91; it reads ET. H93 acts as the Proton donor in catalysis. F118 provides a ligand contact to 5-amino-6-(D-ribitylamino)uracil. R132 contacts (2S)-2-hydroxy-3-oxobutyl phosphate.

It belongs to the DMRL synthase family.

It carries out the reaction (2S)-2-hydroxy-3-oxobutyl phosphate + 5-amino-6-(D-ribitylamino)uracil = 6,7-dimethyl-8-(1-D-ribityl)lumazine + phosphate + 2 H2O + H(+). The protein operates within cofactor biosynthesis; riboflavin biosynthesis; riboflavin from 2-hydroxy-3-oxobutyl phosphate and 5-amino-6-(D-ribitylamino)uracil: step 1/2. Its function is as follows. Catalyzes the formation of 6,7-dimethyl-8-ribityllumazine by condensation of 5-amino-6-(D-ribitylamino)uracil with 3,4-dihydroxy-2-butanone 4-phosphate. This is the penultimate step in the biosynthesis of riboflavin. In Prochlorococcus marinus (strain AS9601), this protein is 6,7-dimethyl-8-ribityllumazine synthase.